The chain runs to 536 residues: GMP synthase [glutamine-hydrolyzing] (536 aa).

The Glutamine amidotransferase type-1 domain maps to 4–206 (KILILDFGSQ…VLDICGARAD (203 aa)). Cys-85 functions as the Nucleophile in the catalytic mechanism. Active-site residues include His-180 and Glu-182. Residues 207-404 (WIMGDYISEA…LGLPYHMVYR (198 aa)) form the GMPS ATP-PPase domain. An ATP-binding site is contributed by 234 to 240 (SGGVDSS).

As to quaternary structure, homodimer.

The catalysed reaction is XMP + L-glutamine + ATP + H2O = GMP + L-glutamate + AMP + diphosphate + 2 H(+). It functions in the pathway purine metabolism; GMP biosynthesis; GMP from XMP (L-Gln route): step 1/1. Functionally, catalyzes the synthesis of GMP from XMP. The sequence is that of GMP synthase [glutamine-hydrolyzing] from Albidiferax ferrireducens (strain ATCC BAA-621 / DSM 15236 / T118) (Rhodoferax ferrireducens).